A 238-amino-acid chain; its full sequence is Ribosomal RNA small subunit methyltransferase G (238 aa).

S-adenosyl-L-methionine-binding positions include Gly77, Phe82, Ala128 to Glu129, and Arg147. Residues Lys219 to Glu238 form a disordered region.

It belongs to the methyltransferase superfamily. RNA methyltransferase RsmG family.

Its subcellular location is the cytoplasm. Functionally, specifically methylates the N7 position of guanine in position 535 of 16S rRNA. This Listeria monocytogenes serovar 1/2a (strain ATCC BAA-679 / EGD-e) protein is Ribosomal RNA small subunit methyltransferase G.